The primary structure comprises 239 residues: 1-(5-phosphoribosyl)-5-[(5-phosphoribosylamino)methylideneamino] imidazole-4-carboxamide isomerase (239 aa).

Catalysis depends on aspartate 8, which acts as the Proton acceptor. The Proton donor role is filled by aspartate 129.

This sequence belongs to the HisA/HisF family.

Its subcellular location is the cytoplasm. The enzyme catalyses 1-(5-phospho-beta-D-ribosyl)-5-[(5-phospho-beta-D-ribosylamino)methylideneamino]imidazole-4-carboxamide = 5-[(5-phospho-1-deoxy-D-ribulos-1-ylimino)methylamino]-1-(5-phospho-beta-D-ribosyl)imidazole-4-carboxamide. It functions in the pathway amino-acid biosynthesis; L-histidine biosynthesis; L-histidine from 5-phospho-alpha-D-ribose 1-diphosphate: step 4/9. In Bacillus mycoides (strain KBAB4) (Bacillus weihenstephanensis), this protein is 1-(5-phosphoribosyl)-5-[(5-phosphoribosylamino)methylideneamino] imidazole-4-carboxamide isomerase.